Consider the following 2554-residue polypeptide: Protein sevenless (2554 aa).

Positions 1-10 are enriched in polar residues; sequence MTMFWQQNVD. Residues 1–25 are disordered; the sequence is MTMFWQQNVDHQSDEQDKQAKGAAP. Topologically, residues 1 to 2123 are extracellular; it reads MTMFWQQNVD…AEPFVSPEKR (2123 aa). A compositionally biased stretch (basic and acidic residues) spans 11–20; that stretch reads HQSDEQDKQA. The N-linked (GlcNAc...) asparagine glycan is linked to Asn-30. Low complexity predominate over residues 51–70; that stretch reads NQQAPGTSSSSSNSQNASPS. A disordered region spans residues 51–75; that stretch reads NQQAPGTSSSSSNSQNASPSKIVVR. N-linked (GlcNAc...) asparagine glycosylation is present at Asn-129. Residues 181–208 are disordered; sequence SRPQSTMAHHPDDRDRDRDPSEEQHGVD. Over residues 189–208 the composition is skewed to basic and acidic residues; sequence HHPDDRDRDRDPSEEQHGVD. The region spanning 440-533 is the Fibronectin type-III 1 domain; it reads APVIEHLMGL…GFVQTHSARN (94 aa). N-linked (GlcNAc...) asparagine glycosylation is found at Asn-481, Asn-505, Asn-617, and Asn-647. Residues 824 to 924 enclose the Fibronectin type-III 2 domain; sequence AGGKPHSLKA…EPLAARTWPL (101 aa). N-linked (GlcNAc...) asparagine glycosylation is present at Asn-966. One copy of the LDL-receptor class B repeat lies at 1010–1053; that stretch reads GRVYWTDLARNCVVRMDPWSGSRELLPVFEANFLALDPRQGHLY. 2 consecutive Fibronectin type-III domains span residues 1202-1290 and 1294-1397; these read LPDS…TPPV and QPRR…VAPE. 12 N-linked (GlcNAc...) asparagine glycosylation sites follow: Asn-1228, Asn-1313, Asn-1353, Asn-1550, Asn-1557, Asn-1639, Asn-1725, Asn-1756, Asn-1804, Asn-1889, Asn-1947, and Asn-2073. Fibronectin type-III domains follow at residues 1801-1901, 1902-1988, and 1995-2117; these read PPRN…SFAE, LPEL…VYET, and QPGK…AEPF. A helical membrane pass occupies residues 2124-2147; that stretch reads GSLVLAIIAPAAIVSSCVLALVLV. Over 2148-2554 the chain is Cytoplasmic; it reads RKVQKRRLRA…LYANEGVSRL (407 aa). Positions 2209–2485 constitute a Protein kinase domain; it reads LKLLRFLGSG…RCYNTLHAIS (277 aa). Residues 2215-2223 and Lys-2242 contribute to the ATP site; that span reads LGSGAFGEV. Residue Asp-2343 is the Proton acceptor of the active site. Tyr-2380 carries the post-translational modification Phosphotyrosine; by autocatalysis. Over residues 2515–2527 the composition is skewed to basic and acidic residues; it reads GQPLEEHREHNER. The tract at residues 2515–2534 is disordered; the sequence is GQPLEEHREHNERPEDENLT.

Belongs to the protein kinase superfamily. Tyr protein kinase family. Insulin receptor subfamily. In terms of assembly, may form a complex with drk and Sos. Binds the phosphotyrosine interaction domain (PID) of Dab.

The protein localises to the cell membrane. The enzyme catalyses L-tyrosyl-[protein] + ATP = O-phospho-L-tyrosyl-[protein] + ADP + H(+). In terms of biological role, receptor for an extracellular signal required to instruct a cell to differentiate into an R7 photoreceptor. The ligand for sev is the boss (bride of sevenless) protein on the surface of the neighboring R8 cell. This Drosophila melanogaster (Fruit fly) protein is Protein sevenless (sev).